A 539-amino-acid chain; its full sequence is Phosphoenolpyruvate carboxykinase (ATP) (539 aa).

Residues Arg64, Tyr206, and Lys212 each contribute to the substrate site. Residues Lys212, His231, and 247–255 (GLSGTGKTT) contribute to the ATP site. Residues Lys212 and His231 each coordinate Mn(2+). Asp268 contacts Mn(2+). Residues Glu296, Arg332, 448-449 (RI), and Thr454 contribute to the ATP site. Residue Arg332 participates in substrate binding.

Belongs to the phosphoenolpyruvate carboxykinase (ATP) family. In terms of assembly, monomer. Requires Mn(2+) as cofactor.

It localises to the cytoplasm. It catalyses the reaction oxaloacetate + ATP = phosphoenolpyruvate + ADP + CO2. Its pathway is carbohydrate biosynthesis; gluconeogenesis. Functionally, involved in the gluconeogenesis. Catalyzes the conversion of oxaloacetate (OAA) to phosphoenolpyruvate (PEP) through direct phosphoryl transfer between the nucleoside triphosphate and OAA. This Yersinia pestis bv. Antiqua (strain Antiqua) protein is Phosphoenolpyruvate carboxykinase (ATP).